Consider the following 339-residue polypeptide: tRNA N6-adenosine threonylcarbamoyltransferase (339 aa).

Residues H112 and H116 each contribute to the Fe cation site. Residues L135–G139, D168, G181, and N273 contribute to the substrate site. D301 serves as a coordination point for Fe cation.

Belongs to the KAE1 / TsaD family. Fe(2+) is required as a cofactor.

The protein resides in the cytoplasm. It carries out the reaction L-threonylcarbamoyladenylate + adenosine(37) in tRNA = N(6)-L-threonylcarbamoyladenosine(37) in tRNA + AMP + H(+). Required for the formation of a threonylcarbamoyl group on adenosine at position 37 (t(6)A37) in tRNAs that read codons beginning with adenine. Is involved in the transfer of the threonylcarbamoyl moiety of threonylcarbamoyl-AMP (TC-AMP) to the N6 group of A37, together with TsaE and TsaB. TsaD likely plays a direct catalytic role in this reaction. The protein is tRNA N6-adenosine threonylcarbamoyltransferase of Coxiella burnetii (strain RSA 493 / Nine Mile phase I).